Consider the following 2551-residue polypeptide: Piezo-type mechanosensitive ion channel component (2551 aa).

8 consecutive transmembrane segments (helical) span residues 5-25 (YACMVLQRIVVPAVLVLAALM), 27-47 (PVGISFVYLLMFFVSPFVPLA), 56-76 (VTAFFIILLTLSTLVLLGHIT), 106-126 (FIDLQPFAIIEWLVPEVLVFA), 204-226 (IHFEGLVKISPLFCLATLFFAAV), 231-250 (VPGGFYFLIFLLSGTYWATC), 256-276 (GFALLLRCVMVVLVLHSLSIV), and 320-340 (LSLDSYLNPFALFFAYFALAL). The interval 354–375 (STRKARTPQPLESGSSVAPSVT) is disordered. The segment covering 363-375 (PLESGSSVAPSVT) has biased composition (polar residues). 9 helical membrane passes run 395-415 (TTTSILDQISYGFVSVGGFIY), 424-444 (ILMMAWSIVYHSWLTFVLLLS), 463-483 (PFIVLYAEALLIAQYIYGMDL), 516-536 (VPLIVKTAFVLMFWVTSRQFF), 548-568 (LADFIAPLQITVGSAGSSYLI), 588-608 (LLVRLWIWLLVLVIFLCAITG), 611-631 (MTGFRICYMALFLFFLLVFQS), 639-659 (IMYGFWLFLIFYAMSILILIY), and 695-715 (FLHLVSPTIIVILTVIQVHYF). A compositionally biased stretch (polar residues) spans 731–741 (GSAQQKPTETT). Positions 731–772 (GSAQQKPTETTALEPAPSKRRGSAGSLRKSQGPSAEAAPGAT) are disordered. Transmembrane regions (helical) follow at residues 819–839 (IAAFVCSVSEVCVLHIIFVGF), 857–877 (LISFIVTVIVLSKMIYQIEYL), 910–930 (LMSLLRTYIIYMVIVTMHAVI), 973–993 (LNFGFYKFGIEISLIALVSTI), 994–1014 (TYRQDIVAVVYALWLVVLLLL), 1022–1042 (IWGVFQAFFAISILTQYIVLV), 1071–1091 (GALHFNHVPKLIFDFIVLVIL), 1152–1172 (VLCGFYWFTLAVVFLAGTNIA), 1174–1194 (LLALGYLIGAFIFLWQGSDFY), 1198–1218 (IHTIIFRWKWLLAFNVANILI), 1239–1259 (WLVHMLGITCTSNVLTEQIML), and 1275–1295 (ITHQVVLLWDTICFAFIIFQL). 2 disordered regions span residues 1426-1521 (NITE…AKDS) and 1592-1658 (ESDE…PQQQ). The segment covering 1430–1448 (SEMKMQRRKTLYDKSKDAP) has biased composition (basic and acidic residues). A compositionally biased stretch (low complexity) spans 1466-1477 (ATASSSASPAPT). Over residues 1497-1511 (QTSKETSDSKSKMEV) the composition is skewed to basic and acidic residues. Composition is skewed to low complexity over residues 1621-1634 (PTSTTLNTNTTTTP) and 1644-1658 (LQPLQPNTTSTPQQQ). 4 helical membrane passes run 1718–1738 (ISSWYALLANTDLICYIVVFI), 1741–1761 (VVNASLISLPLPIMVFLWGTL), 1770–1790 (FWVTLIAYTQAIVLIKCIFQF), and 1817–1837 (AHYAIYDLILLLVLFLHRYLL). Residues 1854–1876 (FTKPTASIDERDDSDNLSQPDSR) are disordered. The next 7 helical transmembrane spans lie at 1937 to 1957 (ALMFLCDFVNFFVLLFGFTAF), 1979 to 1999 (IPFLIMLLVQFLLIVIDRALY), 2008 to 2028 (IIFHFFSVIGIHIWMFFVVPA), 2033 to 2053 (TFNSLAPPIIFYVIKCFYMLL), 2075 to 2095 (FSMVNMIAFKVYMQIPFLYEL), 2151 to 2171 (IMGGTIVLLIVICIWGPLCLF), and 2431 to 2451 (TFSFLTAGGIIGLYTTFVLLA). The interval 2522-2551 (EYVDDDGDTDSIPSRMSVRRPEQLQPQQPQ) is disordered.

The protein belongs to the PIEZO (TC 1.A.75) family.

The protein resides in the cell membrane. Functionally, component of a mechanosensitive channel required for rapidly adapting mechanically activated (MA) currents. Plays a major role in nociception (response to strong or painful touch). Required for maintaining the mechanosensitivity of tarsal bristle mechanosensors. During their evalulation of potential egg-laying sites, females determine the softest substrate for their eggs first by making a coarse evaluation of substrate hardness using mechanosensitive channels nan and Piezo in the leg tarsal bristles, followed by a much finer assessment using nan, iav and Tmc mechanosensitive channels on the labellum. Acts in the nompC- and nan-expressing neurons of the female leg tarsals, to sense the mild differences in egg-laying substrate stiffness. This is Piezo-type mechanosensitive ion channel component from Drosophila melanogaster (Fruit fly).